The following is a 551-amino-acid chain: E3 SUMO-protein ligase CBX4 (551 aa).

Positions 11-69 (FAVESIEKKRIRKGRVEYLVKWRGWSPKYNTWEPEENILDPRLLIAFQNRERQEQLMGY) constitute a Chromo domain. Residues Lys-77, Lys-106, Lys-114, and Lys-125 each participate in a glycyl lysine isopeptide (Lys-Gly) (interchain with G-Cter in SUMO2) cross-link. The disordered stretch occupies residues 125-152 (KKHHQYQPHSKERSGKPPPPGKSGKYYY). The residue at position 149 (Lys-149) is an N6-acetyllysine; alternate. Residue Lys-149 forms a Glycyl lysine isopeptide (Lys-Gly) (interchain with G-Cter in SUMO2); alternate linkage. Glycyl lysine isopeptide (Lys-Gly) (interchain with G-Cter in SUMO2) cross-links involve residues Lys-157, Lys-167, and Lys-178. Residues 172–193 (QYQGGHKEAPSPTCPDLGTKSH) form a disordered region. The residue at position 182 (Ser-182) is a Phosphoserine. Glycyl lysine isopeptide (Lys-Gly) (interchain with G-Cter in SUMO2) cross-links involve residues Lys-191, Lys-205, Lys-212, Lys-223, Lys-249, Lys-268, Lys-278, and Lys-280. Residues 216 to 244 (GGAGAPGKGSEKGPPNGMTPAPKEAVTGN) form a disordered region. 3 stretches are compositionally biased toward basic and acidic residues: residues 281–291 (SGEAAEGEARS), 298–310 (AAEERHPQGDRTF), and 317–332 (SEEKKAEVPCKRREEE). 2 disordered regions span residues 281–399 (SGEA…TVGL) and 430–451 (TPTCLGGSPVSEHPANVSPTAA). Residues Lys-321, Lys-353, and Lys-366 each participate in a glycyl lysine isopeptide (Lys-Gly) (interchain with G-Cter in SUMO2) cross-link. Residues 381–396 (PAHHHHHHHHHHHHHT) show a composition bias toward basic residues. A Phosphoserine modification is found at Ser-463. A Glycyl lysine isopeptide (Lys-Gly) (interchain with G-Cter in SUMO2); alternate cross-link involves residue Lys-490. Residue Lys-490 forms a Glycyl lysine isopeptide (Lys-Gly) (interchain with G-Cter in SUMO); alternate linkage.

Interacts with SUV39H1 and HIPK2. Interacts with CSNK2B. Component of a PRC1-like complex. The composition of the PRC1 complex differs between the PRC1 complex in pluripotent embryonic stem cells containing RNF2, CBX7 and PCGF2, and the PRC1 complex in differentiating cells containing RNF2, CBX2, CBX4 and BMI1. Interacts with RNF2. Interacts (via chromodomain) with histone H3K9Me3 and single-stranded RNA (ssRNA). Interacts with CHTOP. May interact with H3C15 and H3C1. Interacts with PRDM1. Ubiquitinated. Ubiquitination regulates the function of the Polycomb group (PcG) multiprotein PRC1-like complex. Deubiquitinated by USP26. Expressed in embryoid bodies.

It is found in the nucleus. Its subcellular location is the nucleus speckle. Its pathway is protein modification; protein sumoylation. Its function is as follows. E3 SUMO-protein ligase that catalyzes sumoylation of target proteins by promoting the transfer of SUMO from the E2 enzyme to the substrate. Involved in the sumoylation of HNRNPK, a p53/TP53 transcriptional coactivator, hence indirectly regulates p53/TP53 transcriptional activation resulting in p21/CDKN1A expression. Component of a Polycomb group (PcG) multiprotein PRC1-like complex, a complex class required to maintain the transcriptionally repressive state of many genes, including Hox genes, throughout development. PcG PRC1 complex acts via chromatin remodeling and modification of histones; it mediates monoubiquitination of histone H2A 'Lys-119', rendering chromatin heritably changed in its expressibility. Binds to histone H3 trimethylated at 'Lys-9' (H3K9me3). Plays a role in the lineage differentiation of the germ layers in embryonic development. The polypeptide is E3 SUMO-protein ligase CBX4 (Cbx4) (Mus musculus (Mouse)).